The sequence spans 407 residues: Arginine deiminase (407 aa).

Catalysis depends on Cys397, which acts as the Amidino-cysteine intermediate.

The protein belongs to the arginine deiminase family.

It is found in the cytoplasm. It carries out the reaction L-arginine + H2O = L-citrulline + NH4(+). It participates in amino-acid degradation; L-arginine degradation via ADI pathway; carbamoyl phosphate from L-arginine: step 1/2. This is Arginine deiminase from Vibrio cholerae serotype O1 (strain ATCC 39541 / Classical Ogawa 395 / O395).